The chain runs to 157 residues: MRLIAGVLAGFLVICEVTSTSESDRTMAYQTADTDNTQPTGAVENSIASKQFLRTDVVMNRGEERGFEALKKLLPGTKIVAKDGASFSGAFVRKMLGNNAFRNQEFKRWTRSDLDGTALRQMLGDMNKKGRTELLNRYTAFLGPKDGLVYHKPGPIV.

A signal peptide spans 1–23; that stretch reads MRLIAGVLAGFLVICEVTSTSES. The RxLR-dEER signature appears at 51-65; it reads QFLRTDVVMNRGEER.

This sequence belongs to the RxLR effector family.

It is found in the secreted. The protein localises to the host cytoplasm. The protein resides in the host nucleus. Effector that might be involved in host plant infection. The polypeptide is RxLR effector protein PITG_04049 (Phytophthora infestans (strain T30-4) (Potato late blight agent)).